The following is a 466-amino-acid chain: Soluble pyridine nucleotide transhydrogenase (466 aa).

Residue 36–45 participates in FAD binding; the sequence is ERYHNVGGGC.

Belongs to the class-I pyridine nucleotide-disulfide oxidoreductase family. FAD is required as a cofactor.

It localises to the cytoplasm. The enzyme catalyses NAD(+) + NADPH = NADH + NADP(+). Functionally, conversion of NADPH, generated by peripheral catabolic pathways, to NADH, which can enter the respiratory chain for energy generation. The sequence is that of Soluble pyridine nucleotide transhydrogenase from Klebsiella pneumoniae subsp. pneumoniae (strain ATCC 700721 / MGH 78578).